The primary structure comprises 325 residues: MKNFSLWCDFIENSFLDNEFLNLLSHGINGATSNPAIFKNAILNSPIYKDKILKLKGKKTKDIYEELAISDIQKAADKLAPLFYQKNDGFISIEIDPRLHDNTTLSLGEAKRLYSAISKENVMIKIPATKASYEVMYELMKNGISVNATLIFSLEQSQKCFEALNAGLVEFRKNNIALKEQNTRTPQAVISIFVSRFDRLLNPKAKEQNRIGILNANLAYNNIYSKNEPNIRALFASTGVKGDDLPKDYYIKELLFENSVNTAPLDAIEAFKGKMHFKKPLMNFEIYTELNQIISQSEREKACNDLLSDGLEQFCIAFEDILKAL.

The Schiff-base intermediate with substrate role is filled by Lys125.

This sequence belongs to the transaldolase family. Type 2 subfamily.

Its subcellular location is the cytoplasm. The catalysed reaction is D-sedoheptulose 7-phosphate + D-glyceraldehyde 3-phosphate = D-erythrose 4-phosphate + beta-D-fructose 6-phosphate. It participates in carbohydrate degradation; pentose phosphate pathway; D-glyceraldehyde 3-phosphate and beta-D-fructose 6-phosphate from D-ribose 5-phosphate and D-xylulose 5-phosphate (non-oxidative stage): step 2/3. Transaldolase is important for the balance of metabolites in the pentose-phosphate pathway. This Campylobacter jejuni subsp. jejuni serotype O:23/36 (strain 81-176) protein is Transaldolase.